A 450-amino-acid chain; its full sequence is Phosphoglucosamine mutase (450 aa).

The Phosphoserine intermediate role is filled by Ser-101. 4 residues coordinate Mg(2+): Ser-101, Asp-241, Asp-243, and Asp-245. At Ser-101 the chain carries Phosphoserine.

Belongs to the phosphohexose mutase family. Mg(2+) is required as a cofactor. Post-translationally, activated by phosphorylation.

It catalyses the reaction alpha-D-glucosamine 1-phosphate = D-glucosamine 6-phosphate. In terms of biological role, catalyzes the conversion of glucosamine-6-phosphate to glucosamine-1-phosphate. This Listeria monocytogenes serotype 4b (strain F2365) protein is Phosphoglucosamine mutase.